A 105-amino-acid chain; its full sequence is MIYSTTETIPGKEITEIVGVVTGNVVQAKHIGRDIMAGLKSIVGGEIRGYTEMLTEARDLAIQRLVASANEKGADAVVGIRFTTSAIMDGSSEIMAFGTAVKLKK.

It belongs to the UPF0145 family.

This chain is UPF0145 protein Ping_0381, found in Psychromonas ingrahamii (strain DSM 17664 / CCUG 51855 / 37).